Reading from the N-terminus, the 338-residue chain is tRNA N6-adenosine threonylcarbamoyltransferase (338 aa).

Fe cation contacts are provided by His-111 and His-115. Residues Leu-134–Gly-138, Asp-167, Gly-180, and Asn-272 each bind substrate. Fe cation is bound at residue Asp-300.

This sequence belongs to the KAE1 / TsaD family. It depends on Fe(2+) as a cofactor.

The protein localises to the cytoplasm. The enzyme catalyses L-threonylcarbamoyladenylate + adenosine(37) in tRNA = N(6)-L-threonylcarbamoyladenosine(37) in tRNA + AMP + H(+). Required for the formation of a threonylcarbamoyl group on adenosine at position 37 (t(6)A37) in tRNAs that read codons beginning with adenine. Is involved in the transfer of the threonylcarbamoyl moiety of threonylcarbamoyl-AMP (TC-AMP) to the N6 group of A37, together with TsaE and TsaB. TsaD likely plays a direct catalytic role in this reaction. This is tRNA N6-adenosine threonylcarbamoyltransferase from Shewanella putrefaciens (strain CN-32 / ATCC BAA-453).